A 373-amino-acid polypeptide reads, in one-letter code: Glutamate 5-kinase (373 aa).

K15 contacts ATP. Residues S55, D142, and N154 each coordinate substrate. ATP is bound by residues T174–D175 and T216–K222. The PUA domain occupies A281 to R359.

Belongs to the glutamate 5-kinase family.

It localises to the cytoplasm. It catalyses the reaction L-glutamate + ATP = L-glutamyl 5-phosphate + ADP. It participates in amino-acid biosynthesis; L-proline biosynthesis; L-glutamate 5-semialdehyde from L-glutamate: step 1/2. Functionally, catalyzes the transfer of a phosphate group to glutamate to form L-glutamate 5-phosphate. This chain is Glutamate 5-kinase, found in Pelobacter propionicus (strain DSM 2379 / NBRC 103807 / OttBd1).